An 819-amino-acid polypeptide reads, in one-letter code: MTKSNGDVEAAAQVQSLGGKPSNGHGQLNGNGYHQNGGRRDSSQAFTPLLSQHNNGTTNGEVTTPPPSTVLYESTPSNNNEWKAPEDLGHLKNGLGNILSSNNNGTGNGHSLSEKYAHEQAPLTGGYKLPPRSSESEESDFDSDLNGGSSAESSSSCGLFGCRPRWARRFASTHVFMVVFLLAYILQGMYMTYFVSVITTIEKLFQIKSKTTGILLSASEMGQICTAMLLTYFAGRGHRPRWIACGMVLFSIAAFSCALPHFIFGEQLMHSSVILQQTQVSPPNNSFSSHWLNASSEQVNPNLCILGGNQTHSGSECNEERQLEQASHSKITVIVLCIFFGSLLSSGIGQTAVATLGIPYIDDNVGSKQSPMYMAVTIGMRILGPASGFIFGSFCTRWYVNFSNPGFDATDPRWIGAWWLGPVAIGSLMLLASIAMFSFPKQLRGKQKPPGQTATPAAPVEPEEKPKLKDFPKTVRRQLSNDILMFRTASCVFHLLPIAGLYTFLPKYLETQFRLATYDANMIAAFCGILVMGIGIVISGLFILKRKPTARGVAAWIAFTALVYSAGMIILMFIGCSMNDFAGYKPSDGNSPALIEPTCSAALNCTCDKENFAPICADGKMYISACHAGCSSSSLRPSDNRTLYSDCACIPDAPEAVNGYCDNNCKNFIYFILIFAICVFMHSTSEVGSMLLVMRCTHPKDKAMAMGVIQSAIGLFGNVPCPIIYGAVVDSACLIWKSVCGKHGACSLYDADTFRQYFLGITAGIMFLAFLMDLVVWRKAHRIDIAPEDPQEGGPASNGRTLEVSESKQPITPAPDTTV.

Residues 1–157 (MTKSNGDVEA…GSSAESSSSC (157 aa)) form a disordered region. Topologically, residues 1-174 (MTKSNGDVEA…RWARRFASTH (174 aa)) are cytoplasmic. Composition is skewed to polar residues over residues 24–34 (GHGQLNGNGYH), 43–62 (SQAF…NGEV), and 71–81 (LYESTPSNNNE). Composition is skewed to low complexity over residues 91 to 111 (LKNG…NGHS) and 144 to 157 (DLNG…SSSC). The helical transmembrane segment at 175 to 195 (VFMVVFLLAYILQGMYMTYFV) threads the bilayer. The Extracellular portion of the chain corresponds to 196 to 213 (SVITTIEKLFQIKSKTTG). A helical membrane pass occupies residues 214–234 (ILLSASEMGQICTAMLLTYFA). At 235–242 (GRGHRPRW) the chain is on the cytoplasmic side. A helical transmembrane segment spans residues 243 to 263 (IACGMVLFSIAAFSCALPHFI). Over 264 to 332 (FGEQLMHSSV…LEQASHSKIT (69 aa)) the chain is Extracellular. N-linked (GlcNAc...) asparagine glycosylation is found at Asn-284, Asn-293, and Asn-309. Residues 333–353 (VIVLCIFFGSLLSSGIGQTAV) traverse the membrane as a helical segment. The Cytoplasmic segment spans residues 354 to 373 (ATLGIPYIDDNVGSKQSPMY). The chain crosses the membrane as a helical span at residues 374–394 (MAVTIGMRILGPASGFIFGSF). Residues 395–413 (CTRWYVNFSNPGFDATDPR) are Extracellular-facing. N-linked (GlcNAc...) asparagine glycosylation occurs at Asn-401. Residues 414–434 (WIGAWWLGPVAIGSLMLLASI) form a helical membrane-spanning segment. At 435 to 488 (AMFSFPKQLRGKQKPPGQTATPAAPVEPEEKPKLKDFPKTVRRQLSNDILMFRT) the chain is on the cytoplasmic side. The disordered stretch occupies residues 444-466 (RGKQKPPGQTATPAAPVEPEEKP). The chain crosses the membrane as a helical span at residues 489–509 (ASCVFHLLPIAGLYTFLPKYL). Topologically, residues 510 to 522 (ETQFRLATYDANM) are extracellular. Residues 523–543 (IAAFCGILVMGIGIVISGLFI) traverse the membrane as a helical segment. Residues 544 to 553 (LKRKPTARGV) lie on the Cytoplasmic side of the membrane. Residues 554 to 574 (AAWIAFTALVYSAGMIILMFI) traverse the membrane as a helical segment. Residues 575-667 (GCSMNDFAGY…NGYCDNNCKN (93 aa)) are Extracellular-facing. Residues 593–651 (ALIEPTCSAALNCTCDKENFAPICADGKMYISACHAGCSSSSLRPSDNRTLYSDCACIP) form the Kazal-like domain. Cystine bridges form between Cys-599/Cys-630, Cys-607/Cys-626, and Cys-616/Cys-649. An N-linked (GlcNAc...) asparagine glycan is attached at Asn-604. Asn-640 carries N-linked (GlcNAc...) asparagine glycosylation. A helical transmembrane segment spans residues 668–688 (FIYFILIFAICVFMHSTSEVG). The Cytoplasmic portion of the chain corresponds to 689 to 707 (SMLLVMRCTHPKDKAMAMG). The chain crosses the membrane as a helical span at residues 708–728 (VIQSAIGLFGNVPCPIIYGAV). At 729–756 (VDSACLIWKSVCGKHGACSLYDADTFRQ) the chain is on the extracellular side. A helical membrane pass occupies residues 757–777 (YFLGITAGIMFLAFLMDLVVW). The Cytoplasmic segment spans residues 778–819 (RKAHRIDIAPEDPQEGGPASNGRTLEVSESKQPITPAPDTTV). The disordered stretch occupies residues 787–819 (PEDPQEGGPASNGRTLEVSESKQPITPAPDTTV). Residues 807-819 (SKQPITPAPDTTV) show a composition bias toward polar residues.

This sequence belongs to the organo anion transporter (TC 2.A.60) family.

It is found in the cell membrane. Its function is as follows. Transporter that mediates the cellular uptake of ecdysteroids, including ecdysone, from the hemolymph. In Drosophila melanogaster (Fruit fly), this protein is Solute carrier organic anion transporter family member 74D.